Consider the following 184-residue polypeptide: NADH-quinone oxidoreductase subunit B (184 aa).

Residues Cys-63, Cys-64, Cys-128, and Cys-158 each contribute to the [4Fe-4S] cluster site.

This sequence belongs to the complex I 20 kDa subunit family. As to quaternary structure, NDH-1 is composed of 14 different subunits. Subunits NuoB, C, D, E, F, and G constitute the peripheral sector of the complex. The cofactor is [4Fe-4S] cluster.

It localises to the cell inner membrane. The catalysed reaction is a quinone + NADH + 5 H(+)(in) = a quinol + NAD(+) + 4 H(+)(out). NDH-1 shuttles electrons from NADH, via FMN and iron-sulfur (Fe-S) centers, to quinones in the respiratory chain. The immediate electron acceptor for the enzyme in this species is believed to be ubiquinone. Couples the redox reaction to proton translocation (for every two electrons transferred, four hydrogen ions are translocated across the cytoplasmic membrane), and thus conserves the redox energy in a proton gradient. The sequence is that of NADH-quinone oxidoreductase subunit B from Xanthomonas axonopodis pv. citri (strain 306).